The primary structure comprises 288 residues: Inorganic pyrophosphatase (288 aa).

Arg80 serves as a coordination point for diphosphate. Residues Asp117, Asp122, and Asp154 each contribute to the Mg(2+) site. The interval 252–271 (TPSYSDAAAQEIPSASPAPA) is disordered. Over residues 258-271 (AAAQEIPSASPAPA) the composition is skewed to low complexity.

The protein belongs to the PPase family. The cofactor is Mg(2+).

The protein resides in the cytoplasm. The catalysed reaction is diphosphate + H2O = 2 phosphate + H(+). The polypeptide is Inorganic pyrophosphatase (IPP1) (Candida albicans (strain SC5314 / ATCC MYA-2876) (Yeast)).